A 104-amino-acid chain; its full sequence is Snakin-2 (104 aa).

Residues 1-23 form the signal peptide; the sequence is MAISKALFASLLLSLLLLEQVQS. A propeptide spans 24 to 38 (removed in mature form); sequence IQTDQVTSNAISEAA.

The protein belongs to the GASA family. Six disulfide bonds may be present. As to expression, expressed in tubers, stems, flowers, shoot apex and leaves, but not in roots or stolons.

The protein resides in the secreted. The protein localises to the cell wall. Functionally, has an antimicrobial activity. Causes a rapid aggregation of both Gram-positive and Gram-negative bacteria, but the antimicrobial activity is not correlated with the capacity to aggregate bacteria. In Solanum tuberosum (Potato), this protein is Snakin-2 (SN2).